The primary structure comprises 592 residues: Protein kinase C zeta type (592 aa).

In terms of domain architecture, PB1 spans 15-98; sequence RVRLKAHYGG…EVLIIHVFPS (84 aa). The interval 79–145 is interaction with SQSTM1; that stretch reads AFRLACQGRD…KRFNRRAYCG (67 aa). The segment at 130–180 adopts a Phorbol-ester/DAG-type zinc-finger fold; it reads GHLFQAKRFNRRAYCGQCSERIWGLARQGYRCINCKLLVHKRCHVLVPLTC. In terms of domain architecture, Protein kinase spans 252 to 518; that stretch reads FDLIRVIGRG…FSDIKSHAFF (267 aa). ATP contacts are provided by residues 258–266 and Lys281; that span reads IGRGSYAKV. Asp376 serves as the catalytic Proton acceptor. A Phosphothreonine; by PDPK1 and PI3K modification is found at Thr410. Residues 519 to 590 enclose the AGC-kinase C-terminal domain; that stretch reads RSIDWDLLEK…INPLLLSAEE (72 aa). Residue Thr560 is modified to Phosphothreonine. A Phosphoserine modification is found at Ser591.

This sequence belongs to the protein kinase superfamily. AGC Ser/Thr protein kinase family. PKC subfamily. As to quaternary structure, interacts with PARD6A, PARD6B and PARD6G. Part of a complex with PARD3, PARD6A or PARD6B or PARD6G and CDC42 or RAC1. Interacts with ADAP1/CENTA1. Forms a ternary complex with SQSTM1 and KCNAB2. Forms another ternary complex with SQSTM1 and GABRR3. Forms a complex with SQSTM1 and MAP2K5. Interacts (via the protein kinase domain) with WWC1. Forms a tripartite complex with WWC1 and DDR1, but predominantly in the absence of collagen. Component of the Par polarity complex, composed of at least phosphorylated PRKCZ, PARD3 and TIAM1. Interacts with PDPK1 (via N-terminal region). Interacts with WDFY2 (via WD repeats 1-3). Interacts with VAMP2. Forms a complex with WDFY2 and VAMP2. Interacts with APPL1. Interacts with WWC1, WWC2 and WWC3. CDH5 is required for its phosphorylation at Thr-410. Phosphorylated by protein kinase PDPK1; phosphorylation is inhibited by the apoptotic C-terminal cleavage product of PKN2. Phosphorylation at Thr-410 by PI3K activates the kinase. In terms of tissue distribution, isoform 1: In brain, expressed in hippocampus, neocortex and cerebellum (at protein level). Also expressed in lung, liver, kidney, testis and to a lesser extent in pancreas, intestine and skin (at protein level). Isoform 2: Specifically expressed in brain where it localizes to the hippocampus, neocortex and cerebellum (at protein level).

The protein localises to the cytoplasm. It localises to the endosome. Its subcellular location is the cell junction. The protein resides in the membrane. The catalysed reaction is L-seryl-[protein] + ATP = O-phospho-L-seryl-[protein] + ADP + H(+). The enzyme catalyses L-threonyl-[protein] + ATP = O-phospho-L-threonyl-[protein] + ADP + H(+). Atypical PKCs (PRKCI and PRKCZ) exhibit an elevated basal enzymatic activity (that may be due to the interaction with SMG1 or SQSTM1) and are not regulated by diacylglycerol, phosphatidylserine, phorbol esters or calcium ions. Two specific sites, Thr-410 (activation loop of the kinase domain) and Thr-560 (turn motif), need to be phosphorylated for its full activation. Phosphatidylinositol 3,4,5-trisphosphate might be a physiological activator. Isoform 2: Constitutively active. Functionally, calcium- and diacylglycerol-independent serine/threonine-protein kinase that functions in phosphatidylinositol 3-kinase (PI3K) pathway and mitogen-activated protein (MAP) kinase cascade, and is involved in NF-kappa-B activation, mitogenic signaling, cell proliferation, cell polarity, inflammatory response and maintenance of long-term potentiation (LTP). Upon lipopolysaccharide (LPS) treatment in macrophages, or following mitogenic stimuli, functions downstream of PI3K to activate MAP2K1/MEK1-MAPK1/ERK2 signaling cascade independently of RAF1 activation. Required for insulin-dependent activation of AKT3, but may function as an adapter rather than a direct activator. Upon insulin treatment may act as a downstream effector of PI3K and contribute to the activation of translocation of the glucose transporter SLC2A4/GLUT4 and subsequent glucose transport in adipocytes. In EGF-induced cells, binds and activates MAP2K5/MEK5-MAPK7/ERK5 independently of its kinase activity and can activate JUN promoter through MEF2C. Through binding with SQSTM1/p62, functions in interleukin-1 signaling and activation of NF-kappa-B with the specific adapters RIPK1 and TRAF6. Participates in TNF-dependent transactivation of NF-kappa-B by phosphorylating and activating IKBKB kinase, which in turn leads to the degradation of NF-kappa-B inhibitors. In migrating astrocytes, forms a cytoplasmic complex with PARD6A and is recruited by CDC42 to function in the establishment of cell polarity along with the microtubule motor and dynein. In association with FEZ1, stimulates neuronal differentiation in PC12 cells. In the inflammatory response, is required for the T-helper 2 (Th2) differentiation process, including interleukin production, efficient activation of JAK1 and the subsequent phosphorylation and nuclear translocation of STAT6. May be involved in development of allergic airway inflammation (asthma), a process dependent on Th2 immune response. In the NF-kappa-B-mediated inflammatory response, can relieve SETD6-dependent repression of NF-kappa-B target genes by phosphorylating the RELA subunit at 'Ser-311'. Phosphorylates VAMP2 in vitro. Phosphorylates and activates LRRK1, which phosphorylates RAB proteins involved in intracellular trafficking. Involved in late synaptic long term potentiation phase in CA1 hippocampal cells and long term memory maintenance. In Rattus norvegicus (Rat), this protein is Protein kinase C zeta type (Prkcz).